The primary structure comprises 228 residues: MINWLVLNAVILIVAYLLGATPSGYWIGSWFYGVDIREQGSGSTGATNVLRTLGNVPALVVLVIDIFKGALAIALVRYIYSLVFAQNLTIIAGVTDIDTAKEWMVIIAGLIAIVGHTKSIWIGFKGGKSVASSLGILLAISWVVGLGTLSVFIVVLTISRIVSLSSIIAAISVSGLMFFTGQPLPYQIFAITGGIYVIWRHISNIERLLACKEPRIGQKLSTEQKMNK.

The next 6 helical transmembrane spans lie at methionine 1–threonine 21, valine 56–valine 76, methionine 104–phenylalanine 124, isoleucine 136–leucine 156, isoleucine 161–glycine 181, and proline 183–serine 203.

Belongs to the PlsY family. As to quaternary structure, probably interacts with PlsX.

It is found in the cell inner membrane. The catalysed reaction is an acyl phosphate + sn-glycerol 3-phosphate = a 1-acyl-sn-glycero-3-phosphate + phosphate. It functions in the pathway lipid metabolism; phospholipid metabolism. Functionally, catalyzes the transfer of an acyl group from acyl-phosphate (acyl-PO(4)) to glycerol-3-phosphate (G3P) to form lysophosphatidic acid (LPA). This enzyme utilizes acyl-phosphate as fatty acyl donor, but not acyl-CoA or acyl-ACP. This Trichodesmium erythraeum (strain IMS101) protein is Glycerol-3-phosphate acyltransferase.